The chain runs to 350 residues: NADH-quinone oxidoreductase subunit H (350 aa).

A run of 8 helical transmembrane segments spans residues 5–25 (FIIE…IMAM), 76–96 (FLFV…SAVI), 118–138 (IALL…MIGG), 162–182 (IAMG…SLKV), 190–210 (MNWN…CSFA), 243–263 (LFAE…LFFG), 284–304 (LLGI…YMWV), and 319–339 (LGWR…GAVI).

Belongs to the complex I subunit 1 family. In terms of assembly, NDH-1 is composed of 14 different subunits. Subunits NuoA, H, J, K, L, M, N constitute the membrane sector of the complex.

It localises to the cell inner membrane. It catalyses the reaction a quinone + NADH + 5 H(+)(in) = a quinol + NAD(+) + 4 H(+)(out). NDH-1 shuttles electrons from NADH, via FMN and iron-sulfur (Fe-S) centers, to quinones in the respiratory chain. The immediate electron acceptor for the enzyme in this species is believed to be ubiquinone. Couples the redox reaction to proton translocation (for every two electrons transferred, four hydrogen ions are translocated across the cytoplasmic membrane), and thus conserves the redox energy in a proton gradient. This subunit may bind ubiquinone. This Flavobacterium johnsoniae (strain ATCC 17061 / DSM 2064 / JCM 8514 / BCRC 14874 / CCUG 350202 / NBRC 14942 / NCIMB 11054 / UW101) (Cytophaga johnsonae) protein is NADH-quinone oxidoreductase subunit H.